Reading from the N-terminus, the 733-residue chain is Catalase-peroxidase (733 aa).

The signal sequence occupies residues 1 to 23 (MNNESKCPFAAAHGVRSPATARA). The tryptophyl-tyrosyl-methioninium (Trp-Tyr) (with M-250) cross-link spans 96–224 (WHSAGTYRTA…LAAVQMGLIY (129 aa)). H97 acts as the Proton acceptor in catalysis. Residues 224-250 (YVNPEGPDGNPDPVASGRDVRETFARM) constitute a cross-link (tryptophyl-tyrosyl-methioninium (Tyr-Met) (with W-96)). A heme b-binding site is contributed by H265.

Belongs to the peroxidase family. Peroxidase/catalase subfamily. As to quaternary structure, homodimer or homotetramer. Requires heme b as cofactor. Post-translationally, formation of the three residue Trp-Tyr-Met cross-link is important for the catalase, but not the peroxidase activity of the enzyme.

It carries out the reaction H2O2 + AH2 = A + 2 H2O. It catalyses the reaction 2 H2O2 = O2 + 2 H2O. Its function is as follows. Bifunctional enzyme with both catalase and broad-spectrum peroxidase activity. This is Catalase-peroxidase from Azoarcus sp. (strain BH72).